We begin with the raw amino-acid sequence, 417 residues long: 4-hydroxy-3-methylbut-2-en-1-yl diphosphate synthase (flavodoxin) (417 aa).

[4Fe-4S] cluster-binding residues include cysteine 305, cysteine 308, cysteine 351, and glutamate 358.

Belongs to the IspG family. Requires [4Fe-4S] cluster as cofactor.

The enzyme catalyses (2E)-4-hydroxy-3-methylbut-2-enyl diphosphate + oxidized [flavodoxin] + H2O + 2 H(+) = 2-C-methyl-D-erythritol 2,4-cyclic diphosphate + reduced [flavodoxin]. It participates in isoprenoid biosynthesis; isopentenyl diphosphate biosynthesis via DXP pathway; isopentenyl diphosphate from 1-deoxy-D-xylulose 5-phosphate: step 5/6. Its function is as follows. Converts 2C-methyl-D-erythritol 2,4-cyclodiphosphate (ME-2,4cPP) into 1-hydroxy-2-methyl-2-(E)-butenyl 4-diphosphate. This chain is 4-hydroxy-3-methylbut-2-en-1-yl diphosphate synthase (flavodoxin), found in Nitrosomonas europaea (strain ATCC 19718 / CIP 103999 / KCTC 2705 / NBRC 14298).